The chain runs to 458 residues: Argininosuccinate lyase (458 aa).

The protein belongs to the lyase 1 family. Argininosuccinate lyase subfamily.

Its subcellular location is the cytoplasm. It carries out the reaction 2-(N(omega)-L-arginino)succinate = fumarate + L-arginine. It participates in amino-acid biosynthesis; L-arginine biosynthesis; L-arginine from L-ornithine and carbamoyl phosphate: step 3/3. The polypeptide is Argininosuccinate lyase (Neisseria gonorrhoeae (strain ATCC 700825 / FA 1090)).